An 82-amino-acid polypeptide reads, in one-letter code: Acyl carrier protein (82 aa).

The Carrier domain occupies 3–77 (SSIFDKVQNI…QAIEFIQHAI (75 aa)). Serine 37 carries the O-(pantetheine 4'-phosphoryl)serine modification.

Belongs to the acyl carrier protein (ACP) family. 4'-phosphopantetheine is transferred from CoA to a specific serine of apo-ACP by AcpS. This modification is essential for activity because fatty acids are bound in thioester linkage to the sulfhydryl of the prosthetic group.

It localises to the plastid. The protein resides in the chloroplast. The protein operates within lipid metabolism; fatty acid biosynthesis. Its function is as follows. Carrier of the growing fatty acid chain in fatty acid biosynthesis. This chain is Acyl carrier protein, found in Gracilaria tenuistipitata var. liui (Red alga).